The sequence spans 1342 residues: DNA-directed RNA polymerase subunit beta (1342 aa).

Belongs to the RNA polymerase beta chain family. As to quaternary structure, the RNAP catalytic core consists of 2 alpha, 1 beta, 1 beta' and 1 omega subunit. When a sigma factor is associated with the core the holoenzyme is formed, which can initiate transcription.

It carries out the reaction RNA(n) + a ribonucleoside 5'-triphosphate = RNA(n+1) + diphosphate. In terms of biological role, DNA-dependent RNA polymerase catalyzes the transcription of DNA into RNA using the four ribonucleoside triphosphates as substrates. The chain is DNA-directed RNA polymerase subunit beta from Yersinia enterocolitica serotype O:8 / biotype 1B (strain NCTC 13174 / 8081).